A 113-amino-acid polypeptide reads, in one-letter code: Large ribosomal subunit protein bL19 (113 aa).

It belongs to the bacterial ribosomal protein bL19 family.

This protein is located at the 30S-50S ribosomal subunit interface and may play a role in the structure and function of the aminoacyl-tRNA binding site. The sequence is that of Large ribosomal subunit protein bL19 from Corynebacterium glutamicum (strain R).